A 2291-amino-acid polypeptide reads, in one-letter code: Spectrin beta chain (2291 aa).

The tract at residues 1–271 is actin-binding; the sequence is MTTDISIVRW…IITYVVTYYH (271 aa). 2 consecutive Calponin-homology (CH) domains span residues 50–154 and 169–274; these read SVQK…LRFQ and KSAK…HYFS. Spectrin repeat units follow at residues 300–408, 420–521, 525–633, 636–739, 743–843, 848–948, 954–1057, 1060–1166, 1170–1272, 1276–1376, 1386–1484, 1488–1591, 1594–1697, 1701–1802, 1807–1909, 1913–2015, and 2020–2089; these read VHDY…ALRE, AARF…MRLE, QLQQ…RLEE, KLWQ…RLEN, YFQL…QRLL, LYKL…MDDL, VQTF…KLEE, DLHR…VLLS, DQQL…EKLK, KLHE…GAML, QQTC…KALE, EAFQ…HLLE, KVQQ…RLNE, LFML…TQML, ELHK…QKLA, DLFR…ENLQ, and VYQF…KEMK. Positions 2097-2140 are enriched in basic and acidic residues; that stretch reads EAERQRIKEEQEAKAASEAAEQAKREAERRDDVDVGASHDDSER. The segment at 2097–2152 is disordered; that stretch reads EAERQRIKEEQEAKAASEAAEQAKREAERRDDVDVGASHDDSERGGTPGAGEGHEG. One can recognise a PH domain in the interval 2147 to 2259; sequence GEGHEGYVTR…WVTSLKAQSD (113 aa). Ser2195 carries the post-translational modification Phosphoserine. Residues 2262 to 2275 show a composition bias toward polar residues; it reads AVAASRSQTLPATS. The disordered stretch occupies residues 2262–2291; that stretch reads AVAASRSQTLPATSQKDEPKRRSFFTLKKK.

It belongs to the spectrin family. Native spectrin molecule is a tetramer composed of two antiparallel heterodimers joined head to head so that each end of the native molecule includes the C-terminus of the alpha subunit and the N-terminus of the beta subunit.

It localises to the cytoplasm. The protein localises to the cytoskeleton. The protein resides in the cell cortex. Functionally, spectrin is the major constituent of the cytoskeletal network underlying the erythrocyte plasma membrane. It associates with band 4.1 and actin to form the cytoskeletal superstructure of the erythrocyte plasma membrane. Interacts with calmodulin in a calcium-dependent manner. The protein is Spectrin beta chain (beta-Spec) of Drosophila melanogaster (Fruit fly).